The chain runs to 274 residues: Thiamine kinase (274 aa).

The protein belongs to the thiamine kinase family.

It catalyses the reaction thiamine + ATP = thiamine phosphate + ADP + H(+). It participates in cofactor biosynthesis; thiamine diphosphate biosynthesis; thiamine phosphate from thiamine: step 1/1. In terms of biological role, catalyzes the ATP-dependent phosphorylation of thiamine to thiamine phosphate. Is involved in thiamine salvage. The protein is Thiamine kinase of Salmonella choleraesuis (strain SC-B67).